Consider the following 526-residue polypeptide: Outer capsid protein VP5 (526 aa).

The tract at residues 1–42 (MGKIIKSLSRFGKKVGNALTSNTAKKIYNTIGKAAERFAESE) is involved in membrane permeabilization.

It belongs to the orbivirus VP5 family.

Its subcellular location is the virion. In terms of biological role, VP5 protein is one of the two proteins (with VP2) which constitute the virus particle outer capsid. Acts as a membrane permeabilization protein that mediates release of viral particles from endosomal compartments into the cytoplasm. Permeabilization activity is probably negatively regulated by VP2 and is triggered by endosomal degradation of VP2 and exposure to low pH. This Bluetongue virus 13 (isolate USA) (BTV 13) protein is Outer capsid protein VP5 (Segment-6).